A 976-amino-acid chain; its full sequence is Serine/threonine-protein kinase CLA4 (976 aa).

The interval 1 to 46 (MTSIYTSDLKNHRRAPPPPNGAAGSGSGSSSGSGSGSGSGSGSGSL) is disordered. The span at 23 to 43 (AGSGSGSSSGSGSGSGSGSGS) shows a compositional bias: gly residues. In terms of domain architecture, PH spans 73–184 (SKRQSGWVHV…WLDAFTTKCP (112 aa)). A disordered region spans residues 207–231 (LTNGSLNGNSSSSPTSGLSSSSVLT). In terms of domain architecture, CRIB spans 237-250 (VSGPINFTHKVHVG). 2 disordered regions span residues 298 to 522 (GGNS…KIHP) and 559 to 658 (SKKS…QLKK). Composition is skewed to low complexity over residues 313-332 (NSKT…AKNN) and 371-411 (LNGS…PLNN). Residues 430-440 (SGTSSDTYSNK) show a composition bias toward polar residues. Over residues 441–455 (NHQDRSGYEQQRQQR) the composition is skewed to basic and acidic residues. Low complexity predominate over residues 456 to 487 (TDSSQQQQQQQKQHQYQQKSQQQQQQPLSSHQ). Pro residues predominate over residues 496–505 (QVPPTLPSSG). The span at 559 to 583 (SKKSQQQLASKQPSPPSSQQQQQKP) shows a compositional bias: low complexity. Positions 622 to 635 (NETSGVSKTPSPTD) are enriched in polar residues. A Protein kinase domain is found at 685 to 940 (FRIVEKAGQG…TDELLEHSFI (256 aa)). ATP contacts are provided by residues 691–699 (AGQGASGNV) and lysine 715. Aspartate 808 acts as the Proton acceptor in catalysis.

Belongs to the protein kinase superfamily. STE Ser/Thr protein kinase family. STE20 subfamily. As to quaternary structure, interacts (via the CRIB domain) with CDC42.

It carries out the reaction L-seryl-[protein] + ATP = O-phospho-L-seryl-[protein] + ADP + H(+). The enzyme catalyses L-threonyl-[protein] + ATP = O-phospho-L-threonyl-[protein] + ADP + H(+). Ser/Thr kinase required for wild-type filamentous growth, chlamydospore formation, and virulence in mouse systemic infection. This is Serine/threonine-protein kinase CLA4 (CLA4) from Candida albicans (strain SC5314 / ATCC MYA-2876) (Yeast).